A 229-amino-acid polypeptide reads, in one-letter code: Germin-like protein subfamily 1 member 7 (229 aa).

Residues 1 to 24 (MEGFLRFLVAKAILLALASSFVSC) form the signal peptide. Cys34 and Cys50 are joined by a disulfide. The 152-residue stretch at 64–215 (SGLNIAGNTI…AFQLDVNVVK (152 aa)) folds into the Cupin type-1 domain. N-linked (GlcNAc...) asparagine glycosylation is present at Asn79. Residues His112, His114, Glu119, and His161 each coordinate Mn(2+).

The protein belongs to the germin family. Oligomer (believed to be a pentamer but probably hexamer).

It localises to the secreted. The protein resides in the extracellular space. It is found in the apoplast. In terms of biological role, may play a role in plant defense. Probably has no oxalate oxidase activity even if the active site is conserved. This chain is Germin-like protein subfamily 1 member 7, found in Arabidopsis thaliana (Mouse-ear cress).